The sequence spans 246 residues: 1-(5-phosphoribosyl)-5-[(5-phosphoribosylamino)methylideneamino] imidazole-4-carboxamide isomerase (246 aa).

The active-site Proton acceptor is aspartate 8. Aspartate 131 serves as the catalytic Proton donor.

The protein belongs to the HisA/HisF family.

The protein resides in the cytoplasm. The catalysed reaction is 1-(5-phospho-beta-D-ribosyl)-5-[(5-phospho-beta-D-ribosylamino)methylideneamino]imidazole-4-carboxamide = 5-[(5-phospho-1-deoxy-D-ribulos-1-ylimino)methylamino]-1-(5-phospho-beta-D-ribosyl)imidazole-4-carboxamide. It functions in the pathway amino-acid biosynthesis; L-histidine biosynthesis; L-histidine from 5-phospho-alpha-D-ribose 1-diphosphate: step 4/9. This chain is 1-(5-phosphoribosyl)-5-[(5-phosphoribosylamino)methylideneamino] imidazole-4-carboxamide isomerase, found in Lactococcus lactis subsp. cremoris (strain SK11).